We begin with the raw amino-acid sequence, 839 residues long: DNA gyrase subunit A (839 aa).

Residues 46–510 (LPDARDGLKP…ISEDIDDEDL (465 aa)) form the Topo IIA-type catalytic domain. Y134 acts as the O-(5'-phospho-DNA)-tyrosine intermediate in catalysis. The GyrA-box motif lies at 537 to 543 (QHRGGVG).

The protein belongs to the type II topoisomerase GyrA/ParC subunit family. In terms of assembly, heterotetramer, composed of two GyrA and two GyrB chains. In the heterotetramer, GyrA contains the active site tyrosine that forms a transient covalent intermediate with DNA, while GyrB binds cofactors and catalyzes ATP hydrolysis.

Its subcellular location is the cytoplasm. It catalyses the reaction ATP-dependent breakage, passage and rejoining of double-stranded DNA.. A type II topoisomerase that negatively supercoils closed circular double-stranded (ds) DNA in an ATP-dependent manner to modulate DNA topology and maintain chromosomes in an underwound state. Negative supercoiling favors strand separation, and DNA replication, transcription, recombination and repair, all of which involve strand separation. Also able to catalyze the interconversion of other topological isomers of dsDNA rings, including catenanes and knotted rings. Type II topoisomerases break and join 2 DNA strands simultaneously in an ATP-dependent manner. In Mycoplasma pneumoniae (strain ATCC 29342 / M129 / Subtype 1) (Mycoplasmoides pneumoniae), this protein is DNA gyrase subunit A.